Consider the following 718-residue polypeptide: Phenylalanine--tRNA ligase beta subunit (718 aa).

One can recognise a tRNA-binding domain in the interval 39 to 153 (LNEISGIKFG…IFDLESNPLK (115 aa)). In terms of domain architecture, B5 spans 386–460 (SKKTFLDLNY…RFYGLEKLKD (75 aa)). Residues Asp-438, Asp-444, and Asp-448 each coordinate Mg(2+).

This sequence belongs to the phenylalanyl-tRNA synthetase beta subunit family. Type 1 subfamily. As to quaternary structure, tetramer of two alpha and two beta subunits. Mg(2+) serves as cofactor.

Its subcellular location is the cytoplasm. It catalyses the reaction tRNA(Phe) + L-phenylalanine + ATP = L-phenylalanyl-tRNA(Phe) + AMP + diphosphate + H(+). The protein is Phenylalanine--tRNA ligase beta subunit of Mesomycoplasma hyopneumoniae (strain 7448) (Mycoplasma hyopneumoniae).